A 61-amino-acid chain; its full sequence is MKGTPSFGKMNKSHTHIRCRRCGRNAYNVSKHYCAACGFGRTKKIRRYSWQNKKVNGVRIR.

Residues cysteine 19, cysteine 22, cysteine 34, and cysteine 37 each contribute to the Zn(2+) site. The segment at 19–37 (CRRCGRNAYNVSKHYCAAC) adopts a C4-type zinc-finger fold.

It belongs to the eukaryotic ribosomal protein eL37 family. Zn(2+) is required as a cofactor.

Functionally, binds to the 23S rRNA. The sequence is that of Large ribosomal subunit protein eL37 (rpl37e) from Saccharolobus solfataricus (strain ATCC 35092 / DSM 1617 / JCM 11322 / P2) (Sulfolobus solfataricus).